The following is a 409-amino-acid chain: Bone morphogenetic protein 4 (409 aa).

A signal peptide spans 1 to 24; it reads MIPGNRMLMVVLLCQVLLGGASHA. The propeptide occupies 25-293; sequence SLIPETGKKK…ALTRRRRAKR (269 aa). A Phosphoserine modification is found at Ser91. Residues Asn144 and Asn209 are each glycosylated (N-linked (GlcNAc...) asparagine). Residues 284 to 308 are disordered; that stretch reads ALTRRRRAKRSPKHHPQRARKKNKN. 3 cysteine pairs are disulfide-bonded: Cys309–Cys374, Cys338–Cys406, and Cys342–Cys408. N-linked (GlcNAc...) asparagine glycans are attached at residues Asn351 and Asn366.

This sequence belongs to the TGF-beta family. As to quaternary structure, homodimer; disulfide-linked. Interacts with GREM2. Part of a complex consisting of TWSG1 and CHRD. Interacts with the serine proteases, HTRA1 and HTRA3; the interaction with either inhibits BMP4-mediated signaling. The HTRA protease activity is required for this inhibition. Interacts with SOSTDC1. Interacts with FBN1 (via N-terminal domain) and FBN2. Interacts with type I receptor BMPR1A. Interacts with type II receptor BMPR2. Interacts with FSTL1; this interaction inhibits the activation of the BMP4/Smad1/5/8 signaling pathway. Interacts with SCUBE3. Interacts with TGFBR3.

Its subcellular location is the secreted. It is found in the extracellular space. The protein resides in the extracellular matrix. Functionally, growth factor of the TGF-beta superfamily that plays essential roles in many developmental processes, including neurogenesis, vascular development, angiogenesis and osteogenesis. Acts in concert with PTHLH/PTHRP to stimulate ductal outgrowth during embryonic mammary development and to inhibit hair follicle induction. Initiates the canonical BMP signaling cascade by associating with type I receptor BMPR1A and type II receptor BMPR2. Once all three components are bound together in a complex at the cell surface, BMPR2 phosphorylates and activates BMPR1A. In turn, BMPR1A propagates signal by phosphorylating SMAD1/5/8 that travel to the nucleus and act as activators and repressors of transcription of target genes. Positively regulates the expression of odontogenic development regulator MSX1 via inducing the IPO7-mediated import of SMAD1 to the nucleus. Required for MSX1-mediated mesenchymal molar tooth bud development beyond the bud stage, via promoting Wnt signaling. Acts as a positive regulator of odontoblast differentiation during mesenchymal tooth germ formation, expression is repressed during the bell stage by MSX1-mediated inhibition of CTNNB1 signaling. Able to induce its own expression in dental mesenchymal cells and also in the neighboring dental epithelial cells via an MSX1-mediated pathway. Can also signal through non-canonical BMP pathways such as ERK/MAP kinase, PI3K/Akt, or SRC cascades. For example, induces SRC phosphorylation which, in turn, activates VEGFR2, leading to an angiogenic response. This is Bone morphogenetic protein 4 from Bos taurus (Bovine).